We begin with the raw amino-acid sequence, 356 residues long: UDP-N-acetylglucosamine--N-acetylmuramyl-(pentapeptide) pyrophosphoryl-undecaprenol N-acetylglucosamine transferase (356 aa).

UDP-N-acetyl-alpha-D-glucosamine is bound by residues 12 to 14 (TGG), asparagine 124, arginine 163, serine 188, isoleucine 242, and glutamine 287.

This sequence belongs to the glycosyltransferase 28 family. MurG subfamily.

The protein resides in the cell inner membrane. It catalyses the reaction di-trans,octa-cis-undecaprenyl diphospho-N-acetyl-alpha-D-muramoyl-L-alanyl-D-glutamyl-meso-2,6-diaminopimeloyl-D-alanyl-D-alanine + UDP-N-acetyl-alpha-D-glucosamine = di-trans,octa-cis-undecaprenyl diphospho-[N-acetyl-alpha-D-glucosaminyl-(1-&gt;4)]-N-acetyl-alpha-D-muramoyl-L-alanyl-D-glutamyl-meso-2,6-diaminopimeloyl-D-alanyl-D-alanine + UDP + H(+). It participates in cell wall biogenesis; peptidoglycan biosynthesis. Its function is as follows. Cell wall formation. Catalyzes the transfer of a GlcNAc subunit on undecaprenyl-pyrophosphoryl-MurNAc-pentapeptide (lipid intermediate I) to form undecaprenyl-pyrophosphoryl-MurNAc-(pentapeptide)GlcNAc (lipid intermediate II). This chain is UDP-N-acetylglucosamine--N-acetylmuramyl-(pentapeptide) pyrophosphoryl-undecaprenol N-acetylglucosamine transferase, found in Pseudomonas syringae pv. tomato (strain ATCC BAA-871 / DC3000).